The sequence spans 622 residues: Probable Xaa-Pro aminopeptidase P (622 aa).

Mn(2+)-binding residues include D419, D430, E528, and E542.

Belongs to the peptidase M24B family. Mn(2+) is required as a cofactor.

The enzyme catalyses Release of any N-terminal amino acid, including proline, that is linked to proline, even from a dipeptide or tripeptide.. Functionally, catalyzes the removal of a penultimate prolyl residue from the N-termini of peptides. This is Probable Xaa-Pro aminopeptidase P (AMPP) from Coprinopsis cinerea (strain Okayama-7 / 130 / ATCC MYA-4618 / FGSC 9003) (Inky cap fungus).